A 265-amino-acid chain; its full sequence is Isoprenyl transferase (265 aa).

Asp35 is a catalytic residue. Asp35 is a binding site for Mg(2+). Substrate is bound by residues 36-39, Trp40, Arg48, His52, and 80-82; these read GNGR and SIE. The active-site Proton acceptor is Asn83. Residues Trp84, Arg86, Arg203, and 209–211 each bind substrate; that span reads RIS. Glu222 is a Mg(2+) binding site.

It belongs to the UPP synthase family. Homodimer. Mg(2+) serves as cofactor.

Catalyzes the condensation of isopentenyl diphosphate (IPP) with allylic pyrophosphates generating different type of terpenoids. The polypeptide is Isoprenyl transferase (Chlorobaculum tepidum (strain ATCC 49652 / DSM 12025 / NBRC 103806 / TLS) (Chlorobium tepidum)).